The following is a 303-amino-acid chain: Methionyl-tRNA formyltransferase (303 aa).

Position 108–111 (108–111) interacts with (6S)-5,6,7,8-tetrahydrofolate; the sequence is SDLP.

It belongs to the Fmt family.

The enzyme catalyses L-methionyl-tRNA(fMet) + (6R)-10-formyltetrahydrofolate = N-formyl-L-methionyl-tRNA(fMet) + (6S)-5,6,7,8-tetrahydrofolate + H(+). Attaches a formyl group to the free amino group of methionyl-tRNA(fMet). The formyl group appears to play a dual role in the initiator identity of N-formylmethionyl-tRNA by promoting its recognition by IF2 and preventing the misappropriation of this tRNA by the elongation apparatus. This chain is Methionyl-tRNA formyltransferase, found in Rickettsia africae (strain ESF-5).